The primary structure comprises 394 residues: Cystathionine gamma-lyase (394 aa).

The tract at residues 37–56 is disordered; that stretch reads KQSSPANPIGTYEYSRSQNP. R52, Y104, and R109 together coordinate substrate. N6-(pyridoxal phosphate)lysine is present on K204. E334 lines the substrate pocket. Position 362 is a phosphoserine (S362).

It belongs to the trans-sulfuration enzymes family. In terms of assembly, homotetramer. Pyridoxal 5'-phosphate is required as a cofactor.

It is found in the cytoplasm. It carries out the reaction L,L-cystathionine + H2O = 2-oxobutanoate + L-cysteine + NH4(+). The protein operates within amino-acid biosynthesis; L-cysteine biosynthesis; L-cysteine from L-homocysteine and L-serine: step 2/2. Catalyzes the production of cysteine from cystathionine in the reverse transsulfuration pathway for the biosynthesis of sulfur-containing amino acids cysteine and methionine. In this pathway, homocysteine sulfur is converted to cysteine sulfur. Also has cystathionine beta-lyase and cystathionine gamma-synthase activities in vitro. Cystathionine beta-lyase may be physiological, while cystathionine gamma-synthase activity is not, as the required substrate O-succinyl-L-homoserine(OSH) does not occur naturally in S.cerevisiae. In Saccharomyces cerevisiae (strain ATCC 204508 / S288c) (Baker's yeast), this protein is Cystathionine gamma-lyase.